Reading from the N-terminus, the 308-residue chain is MNKLRIATRGSALALWQSKYIQNLIENNTEVEVELQSMKTKGDVILDTPLAKIGGKGLFTKELEESMLRGESDLAVHSLKDVPVVFPKGLILTAISEREDVRDSFVSEKFASFNELPKGAKVGTTSLRRKMQLLIKRPDLKIISLRGNINTRLRKLKENEFDAIILASAGLKRLNLMENIKYFVPFSLDEMIPAMGQGALGIECVDKSEVIEILKFINNENSVIATTIERDFVAKLNGGCQVPIGVNAEISGDIIKVRAIVGLPDGSEFIKDKREISKADFKNFGTKLADEFISRGAIELLKRAEEMA.

Cys240 bears the S-(dipyrrolylmethanemethyl)cysteine mark.

It belongs to the HMBS family. In terms of assembly, monomer. It depends on dipyrromethane as a cofactor.

The catalysed reaction is 4 porphobilinogen + H2O = hydroxymethylbilane + 4 NH4(+). The protein operates within porphyrin-containing compound metabolism; protoporphyrin-IX biosynthesis; coproporphyrinogen-III from 5-aminolevulinate: step 2/4. In terms of biological role, tetrapolymerization of the monopyrrole PBG into the hydroxymethylbilane pre-uroporphyrinogen in several discrete steps. This is Porphobilinogen deaminase from Campylobacter hominis (strain ATCC BAA-381 / DSM 21671 / CCUG 45161 / LMG 19568 / NCTC 13146 / CH001A).